The following is a 186-amino-acid chain: Large ribosomal subunit protein bL9 (186 aa).

Residues 153 to 186 (ELRQVKSQSQKSQQQEAKQNEVGEATDSDKADQK) are disordered. A compositionally biased stretch (low complexity) spans 157–169 (VKSQSQKSQQQEA).

Belongs to the bacterial ribosomal protein bL9 family.

Functionally, binds to the 23S rRNA. This chain is Large ribosomal subunit protein bL9, found in Wolbachia sp. subsp. Brugia malayi (strain TRS).